The primary structure comprises 95 residues: Probable FAD-linked sulfhydryl oxidase OPG072 (95 aa).

Residues 1–8 (MNPKHWGR) lie on the Intravirion side of the membrane. The 95-residue stretch at 1-95 (MNPKHWGRAV…AIDVTKVNPL (95 aa)) folds into the ERV/ALR sulfhydryl oxidase domain. A helical transmembrane segment spans residues 9-25 (AVWTIIFIVLSQAGLDG). Topologically, residues 26–95 (NIEACKRKLY…AIDVTKVNPL (70 aa)) are virion surface. The cysteines at positions 43 and 46 are disulfide-linked.

This sequence belongs to the orthopoxvirus OPG072 family. As to quaternary structure, interacts with OPG128/A2.5; this interaction involves formation of a transient disulfide-bonded intermediate, allowing disulfide bond transfer. FAD serves as cofactor.

It localises to the virion membrane. Its subcellular location is the host cytoplasm. It carries out the reaction 2 R'C(R)SH + O2 = R'C(R)S-S(R)CR' + H2O2. Functionally, FAD-dependent sulfhydryl oxidase that catalyzes disulfide bond formation. The complete pathway for formation of disulfide bonds in intracellular virion membrane proteins sequentially involves thiol-disulfide transfer between OPG072/E10, OPG128/A2.5 and OPG088/G4. The sequence is that of Probable FAD-linked sulfhydryl oxidase OPG072 (OPG072) from Bos taurus (Bovine).